A 220-amino-acid chain; its full sequence is Iron-sulfur cluster repair protein YtfE (220 aa).

The protein belongs to the RIC family. YtfE subfamily. As to quaternary structure, homodimer.

The protein localises to the cytoplasm. Its function is as follows. Di-iron-containing protein involved in the repair of iron-sulfur clusters damaged by oxidative and nitrosative stress conditions. The polypeptide is Iron-sulfur cluster repair protein YtfE (Enterobacter sp. (strain 638)).